A 1284-amino-acid chain; its full sequence is ATP-dependent helicase fft2 (1284 aa).

Composition is skewed to polar residues over residues 1–10 (MLPYNSNYLS) and 20–57 (ENPQ…AMYG). Disordered regions lie at residues 1-57 (MLPY…AMYG), 185-252 (AQPP…LPPV), 317-339 (KQSP…QSQK), 353-388 (STQA…EEPE), and 446-465 (PDDV…KNPM). The segment covering 201-241 (RSNSRSSARSTARSAPRSTQRSRSSSANPVTTPPVNNTLLT) has biased composition (low complexity). Composition is skewed to polar residues over residues 320 to 339 (PVAS…QSQK) and 353 to 372 (STQA…ASKK). Serine 323 bears the Phosphoserine mark. Residues 376-388 (EEDEFYDSEEEPE) show a composition bias toward acidic residues. Serine 383 is modified (phosphoserine). The Helicase ATP-binding domain maps to 562–730 (HLLYQQKLSG…VSLLAFILPN (169 aa)). ATP is bound at residue 575–582 (DEMGLGKT). The DEGH box signature appears at 681-684 (DEGH). Residues 816–839 (QQLRRDDKRNKRSKNDEESDGKSL) form a disordered region. Residues 818 to 831 (LRRDDKRNKRSKND) show a composition bias toward basic and acidic residues. The Helicase C-terminal domain maps to 928 to 1079 (VLKELLPKMK…SLSSDGKDRE (152 aa)). Residues 1088–1284 (DMLDEENNGN…SEVDNNAAKD (197 aa)) are disordered. Residues 1095 to 1107 (NGNNTKPEITGNE) show a composition bias toward polar residues. Positions 1143–1177 (EKTDLADGDEKANIKTEMKSETVEGDNKELRETMK) are enriched in basic and acidic residues. The span at 1180 to 1194 (NVQTDSNAAVPSSKS) shows a compositional bias: polar residues. 2 stretches are compositionally biased toward basic and acidic residues: residues 1243-1256 (QLEK…KKPD) and 1266-1284 (EEEK…AAKD).

The protein belongs to the SNF2/RAD54 helicase family.

It is found in the cytoplasm. Its subcellular location is the nucleus. The catalysed reaction is ATP + H2O = ADP + phosphate + H(+). DNA helicase that possesses intrinsic ATP-dependent nucleosome-remodeling activity and is required for heterochromatin organization. The polypeptide is ATP-dependent helicase fft2 (fft2) (Schizosaccharomyces pombe (strain 972 / ATCC 24843) (Fission yeast)).